The primary structure comprises 411 residues: Meiotically up-regulated gene 147 protein (411 aa).

Disordered regions lie at residues 1–52, 102–137, and 156–191; these read MLAQ…FENK, EREE…ELAD, and HQHE…HYES. The span at 33-43 shows a compositional bias: polar residues; it reads TQNESNLQQSE. Residues 156-172 show a composition bias toward basic and acidic residues; the sequence is HQHEDEFSSSNKDKGFT.

The protein resides in the cytoplasm. It localises to the nucleus. Has a role in meiosis. This chain is Meiotically up-regulated gene 147 protein (mug147), found in Schizosaccharomyces pombe (strain 972 / ATCC 24843) (Fission yeast).